The primary structure comprises 74 residues: Large ribosomal subunit protein uL29 (74 aa).

The protein belongs to the universal ribosomal protein uL29 family.

The chain is Large ribosomal subunit protein uL29 from Streptomyces avermitilis (strain ATCC 31267 / DSM 46492 / JCM 5070 / NBRC 14893 / NCIMB 12804 / NRRL 8165 / MA-4680).